Consider the following 1295-residue polypeptide: Phosphoribosylformylglycinamidine synthase (1295 aa).

A disordered region spans residues 305–327; sequence WPGAATGSGGEIRDEGATGRGAK. ATP contacts are provided by residues 307–318 and A678; that span reads GAATGSGGEIRD. Mg(2+) is bound by residues E718, N722, and D884. S886 contacts ATP. Residues 1042–1295 enclose the Glutamine amidotransferase type-1 domain; it reads VAVLREQGVN…IFRNARKQLG (254 aa). The Nucleophile role is filled by C1135. Active-site residues include H1260 and E1262.

The protein in the N-terminal section; belongs to the FGAMS family. Monomer.

It is found in the cytoplasm. The catalysed reaction is N(2)-formyl-N(1)-(5-phospho-beta-D-ribosyl)glycinamide + L-glutamine + ATP + H2O = 2-formamido-N(1)-(5-O-phospho-beta-D-ribosyl)acetamidine + L-glutamate + ADP + phosphate + H(+). It functions in the pathway purine metabolism; IMP biosynthesis via de novo pathway; 5-amino-1-(5-phospho-D-ribosyl)imidazole from N(2)-formyl-N(1)-(5-phospho-D-ribosyl)glycinamide: step 1/2. Functionally, phosphoribosylformylglycinamidine synthase involved in the purines biosynthetic pathway. Catalyzes the ATP-dependent conversion of formylglycinamide ribonucleotide (FGAR) and glutamine to yield formylglycinamidine ribonucleotide (FGAM) and glutamate. The polypeptide is Phosphoribosylformylglycinamidine synthase (Escherichia coli (strain UTI89 / UPEC)).